The primary structure comprises 261 residues: Syntaxin-7 (261 aa).

S2 carries the N-acetylserine modification. At 2–238 (SYTPGIGGDP…NYQRKSRKTL (237 aa)) the chain is on the cytoplasmic side. At T4 the chain carries Phosphothreonine. The stretch at 47–68 (ELRQQLQQEQQYTNQLAKETDK) forms a coiled coil. A Phosphothreonine modification is found at T79. 4 positions are modified to phosphoserine: S125, S126, S129, and S205. The interval 128–148 (VSGGFPEDSSKEKNFVSWESQ) is disordered. One can recognise a t-SNARE coiled-coil homology domain in the interval 165–227 (LRLIHERESS…QQANQQLSRA (63 aa)). The chain crosses the membrane as a helical; Anchor for type IV membrane protein span at residues 239–259 (CIIILILVVGIVIIFFIVWGL). Topologically, residues 260-261 (KG) are vesicular.

It belongs to the syntaxin family. In terms of assembly, interacts with VPS11, VPS16 and VPS18. Interacts with VPS33A. Forms a SNARE complex with VTI1B, STX8 and VAMP8 which functions in the homotypic fusion of late endosomes. Component of the SNARE complex composed of STX7, STX8, VAMP7 and VTI1B that is required for heterotypic fusion of late endosomes with lysosomes. Interacts with TPC1. In terms of tissue distribution, detected in all tissues tested. Highest expression is found in kidney followed by lung, spleen, heart and brain. Lower expression, in skeletal muscle, liver and testis.

It is found in the early endosome membrane. In terms of biological role, may be involved in protein trafficking from the plasma membrane to the early endosome (EE) as well as in homotypic fusion of endocytic organelles. Mediates the endocytic trafficking from early endosomes to late endosomes and lysosomes. This chain is Syntaxin-7 (Stx7), found in Rattus norvegicus (Rat).